Reading from the N-terminus, the 261-residue chain is Ribosomal RNA small subunit methyltransferase J (261 aa).

S-adenosyl-L-methionine is bound by residues 111-112, 127-128, 163-164, and Asp-181; these read RD, ER, and SS.

The protein belongs to the methyltransferase superfamily. RsmJ family.

The protein localises to the cytoplasm. It catalyses the reaction guanosine(1516) in 16S rRNA + S-adenosyl-L-methionine = N(2)-methylguanosine(1516) in 16S rRNA + S-adenosyl-L-homocysteine + H(+). Its function is as follows. Specifically methylates the guanosine in position 1516 of 16S rRNA. This Shewanella sp. (strain MR-4) protein is Ribosomal RNA small subunit methyltransferase J.